The primary structure comprises 950 residues: Translation initiation factor IF-2 (950 aa).

Composition is skewed to basic and acidic residues over residues lysine 128–alanine 156, alanine 165–lysine 186, lysine 200–arginine 234, and asparagine 291–arginine 312. The tract at residues lysine 128–proline 352 is disordered. Polar residues-rich tracts occupy residues asparagine 322 to glutamine 336 and tyrosine 343 to proline 352. A tr-type G domain is found at glutamate 448 to lysine 619. The tract at residues glycine 457–threonine 464 is G1. Glycine 457 to threonine 464 serves as a coordination point for GTP. The segment at glycine 482 to histidine 486 is G2. Residues aspartate 503 to glycine 506 form a G3 region. GTP-binding positions include aspartate 503–histidine 507 and asparagine 557–aspartate 560. Residues asparagine 557–aspartate 560 form a G4 region. Positions serine 595–lysine 597 are G5.

It belongs to the TRAFAC class translation factor GTPase superfamily. Classic translation factor GTPase family. IF-2 subfamily.

Its subcellular location is the cytoplasm. In terms of biological role, one of the essential components for the initiation of protein synthesis. Protects formylmethionyl-tRNA from spontaneous hydrolysis and promotes its binding to the 30S ribosomal subunits. Also involved in the hydrolysis of GTP during the formation of the 70S ribosomal complex. The sequence is that of Translation initiation factor IF-2 (infB) from Lactococcus lactis subsp. cremoris (Streptococcus cremoris).